A 107-amino-acid polypeptide reads, in one-letter code: Nucleoid-associated protein GbCGDNIH1_0260 (107 aa).

This sequence belongs to the YbaB/EbfC family. As to quaternary structure, homodimer.

It localises to the cytoplasm. The protein resides in the nucleoid. Functionally, binds to DNA and alters its conformation. May be involved in regulation of gene expression, nucleoid organization and DNA protection. The sequence is that of Nucleoid-associated protein GbCGDNIH1_0260 from Granulibacter bethesdensis (strain ATCC BAA-1260 / CGDNIH1).